The chain runs to 445 residues: Tubulin beta-2B chain (445 aa).

An MREI motif motif is present at residues 1 to 4; that stretch reads MREI. Residue Gln-11 coordinates GTP. A Phosphoserine modification is found at Ser-40. A Phosphothreonine modification is found at Thr-55. Lys-58 carries the N6-acetyllysine; alternate modification. An N6-succinyllysine; alternate modification is found at Lys-58. Lys-58 is covalently cross-linked (Glycyl lysine isopeptide (Lys-Gly) (interchain with G-Cter in ubiquitin); alternate). The GTP site is built by Glu-69, Ser-138, Gly-142, Thr-143, and Gly-144. Mg(2+) is bound at residue Glu-69. Position 172 is a phosphoserine; by CDK1 (Ser-172). Residues Asn-204 and Asn-226 each coordinate GTP. 2 positions are modified to phosphothreonine: Thr-285 and Thr-290. The residue at position 318 (Arg-318) is an Omega-N-methylarginine. Residue Lys-324 forms a Glycyl lysine isopeptide (Lys-Gly) (interchain with G-Cter in ubiquitin) linkage. A disordered region spans residues 422–445; it reads YQQYQDATADEQGEFEEEEGEDEA. Positions 429-445 are enriched in acidic residues; the sequence is TADEQGEFEEEEGEDEA. Glu-438 is modified (5-glutamyl polyglutamate).

Belongs to the tubulin family. As to quaternary structure, dimer of alpha and beta chains. A typical microtubule is a hollow water-filled tube with an outer diameter of 25 nm and an inner diameter of 15 nM. Alpha-beta heterodimers associate head-to-tail to form protofilaments running lengthwise along the microtubule wall with the beta-tubulin subunit facing the microtubule plus end conferring a structural polarity. Microtubules usually have 13 protofilaments but different protofilament numbers can be found in some organisms and specialized cells. The cofactor is Mg(2+). Some glutamate residues at the C-terminus are polyglycylated, resulting in polyglycine chains on the gamma-carboxyl group. Glycylation is mainly limited to tubulin incorporated into axonemes (cilia and flagella) whereas glutamylation is prevalent in neuronal cells, centrioles, axonemes, and the mitotic spindle. Both modifications can coexist on the same protein on adjacent residues, and lowering polyglycylation levels increases polyglutamylation, and reciprocally. The precise function of polyglycylation is still unclear. Post-translationally, some glutamate residues at the C-terminus are polyglutamylated, resulting in polyglutamate chains on the gamma-carboxyl group. Polyglutamylation plays a key role in microtubule severing by spastin (SPAST). SPAST preferentially recognizes and acts on microtubules decorated with short polyglutamate tails: severing activity by SPAST increases as the number of glutamates per tubulin rises from one to eight, but decreases beyond this glutamylation threshold. In terms of processing, phosphorylated on Ser-172 by CDK1 during the cell cycle, from metaphase to telophase, but not in interphase. This phosphorylation inhibits tubulin incorporation into microtubules.

It localises to the cytoplasm. It is found in the cytoskeleton. In terms of biological role, tubulin is the major constituent of microtubules, a cylinder consisting of laterally associated linear protofilaments composed of alpha- and beta-tubulin heterodimers. Microtubules grow by the addition of GTP-tubulin dimers to the microtubule end, where a stabilizing cap forms. Below the cap, tubulin dimers are in GDP-bound state, owing to GTPase activity of alpha-tubulin. Implicated in neuronal migration. The polypeptide is Tubulin beta-2B chain (TUBB2B) (Bos taurus (Bovine)).